A 452-amino-acid chain; its full sequence is Phosphatidylinositol N-acetylglucosaminyltransferase GPI3 subunit (452 aa).

A helical transmembrane segment spans residues leucine 407–proline 427.

It belongs to the glycosyltransferase group 1 family. In terms of assembly, component of the phosphatidylinositol N-acetylglucosaminyltransferase complex composed of at least GPI1, GPI2, GPI3, GPI15, GPI19 and ERI1.

The protein localises to the endoplasmic reticulum membrane. The enzyme catalyses a 1,2-diacyl-sn-glycero-3-phospho-(1D-myo-inositol) + UDP-N-acetyl-alpha-D-glucosamine = a 6-(N-acetyl-alpha-D-glucosaminyl)-1-(1,2-diacyl-sn-glycero-3-phospho)-1D-myo-inositol + UDP + H(+). The protein operates within glycolipid biosynthesis; glycosylphosphatidylinositol-anchor biosynthesis. Its activity is regulated as follows. Inhibited by Ras, probably via the interaction between RAS2 and ERI1. In terms of biological role, catalytic subunit in the complex catalyzing the transfer of N-acetylglucosamine from UDP-N-acetylglucosamine to phosphatidylinositol, the first step of GPI biosynthesis. The protein is Phosphatidylinositol N-acetylglucosaminyltransferase GPI3 subunit (SPT14) of Saccharomyces cerevisiae (strain RM11-1a) (Baker's yeast).